The chain runs to 140 residues: Small ribosomal subunit protein uS19 (140 aa).

This sequence belongs to the universal ribosomal protein uS19 family.

Its function is as follows. Protein S19 forms a complex with S13 that binds strongly to the 16S ribosomal RNA. This Saccharolobus solfataricus (strain ATCC 35092 / DSM 1617 / JCM 11322 / P2) (Sulfolobus solfataricus) protein is Small ribosomal subunit protein uS19 (rps19).